A 296-amino-acid chain; its full sequence is Glycine--tRNA ligase alpha subunit (296 aa).

The protein belongs to the class-II aminoacyl-tRNA synthetase family. As to quaternary structure, tetramer of two alpha and two beta subunits.

It localises to the cytoplasm. It catalyses the reaction tRNA(Gly) + glycine + ATP = glycyl-tRNA(Gly) + AMP + diphosphate. In Desulfitobacterium hafniense (strain Y51), this protein is Glycine--tRNA ligase alpha subunit.